The primary structure comprises 666 residues: Probable potassium transport system protein Kup (666 aa).

The next 12 helical transmembrane spans lie at 16 to 36 (GFII…LYTM), 58 to 78 (ISLI…LIAL), 98 to 118 (ISPW…SDGA), 141 to 161 (IYQN…VLFG), 165 to 185 (FGTG…FSFL), 221 to 241 (IFIL…YSDL), 253 to 273 (WPFV…WILA), 299 to 319 (LATL…FTLI), 343 to 363 (LYIP…VLAF), 373 to 393 (YGLA…YYLI), 399 to 419 (PILA…FFLA), and 424 to 444 (FMHG…VMFI).

Belongs to the HAK/KUP transporter (TC 2.A.72) family.

The protein localises to the cell membrane. The catalysed reaction is K(+)(in) + H(+)(in) = K(+)(out) + H(+)(out). Functionally, transport of potassium into the cell. Likely operates as a K(+):H(+) symporter. This Streptococcus pyogenes serotype M28 (strain MGAS6180) protein is Probable potassium transport system protein Kup.